Consider the following 188-residue polypeptide: Peptide deformylase (188 aa).

Cysteine 94 and histidine 136 together coordinate Fe cation. Residue glutamate 137 is part of the active site. Position 140 (histidine 140) interacts with Fe cation.

The protein belongs to the polypeptide deformylase family. Fe(2+) serves as cofactor.

It carries out the reaction N-terminal N-formyl-L-methionyl-[peptide] + H2O = N-terminal L-methionyl-[peptide] + formate. In terms of biological role, removes the formyl group from the N-terminal Met of newly synthesized proteins. Requires at least a dipeptide for an efficient rate of reaction. N-terminal L-methionine is a prerequisite for activity but the enzyme has broad specificity at other positions. This is Peptide deformylase from Chlorobium phaeobacteroides (strain DSM 266 / SMG 266 / 2430).